A 331-amino-acid polypeptide reads, in one-letter code: UPF0194 membrane protein YbhG (331 aa).

An N-terminal signal peptide occupies residues 1-15 (MKKPVVIGLAVVVLA). A coiled-coil region spans residues 107–208 (EEIAQAAAAV…LNLQDSTLIA (102 aa)).

It belongs to the UPF0194 family.

The protein resides in the periplasm. The sequence is that of UPF0194 membrane protein YbhG from Escherichia coli O139:H28 (strain E24377A / ETEC).